Here is a 448-residue protein sequence, read N- to C-terminus: Pentatricopeptide repeat-containing protein At1g80550, mitochondrial (448 aa).

Residues 1–21 constitute a mitochondrion transit peptide; sequence MLLLRRLNRVRIASPYSVRLL. PPR repeat units lie at residues 80–110, 116–146, 150–186, 188–222, 223–257, 258–292, 293–327, 331–359, 360–394, and 395–429; these read TTET…MIGN, NHVT…LDDF, DETS…GFSV, NTKI…GVTK, DLFS…RMKL, DVVA…GCEP, NVAT…GCQP, TYMC…GVRP, KMDT…GDTP, and DSAA…GLSP.

It belongs to the PPR family. P subfamily.

Its subcellular location is the mitochondrion. This chain is Pentatricopeptide repeat-containing protein At1g80550, mitochondrial, found in Arabidopsis thaliana (Mouse-ear cress).